We begin with the raw amino-acid sequence, 299 residues long: Oxygen-dependent coproporphyrinogen-III oxidase (299 aa).

Ser-92 is a binding site for substrate. Residues His-96 and His-106 each coordinate Mn(2+). His-106 functions as the Proton donor in the catalytic mechanism. Substrate is bound at residue 108 to 110; it reads NVR. Residues His-145 and His-175 each coordinate Mn(2+). The interval 240–275 is important for dimerization; it reads YVEFNLVWDRGTLFGLQTGGRTESILMSMPPLVRWE. 258 to 260 contributes to the substrate binding site; the sequence is GGR.

It belongs to the aerobic coproporphyrinogen-III oxidase family. As to quaternary structure, homodimer. Requires Mn(2+) as cofactor.

Its subcellular location is the cytoplasm. The catalysed reaction is coproporphyrinogen III + O2 + 2 H(+) = protoporphyrinogen IX + 2 CO2 + 2 H2O. It participates in porphyrin-containing compound metabolism; protoporphyrin-IX biosynthesis; protoporphyrinogen-IX from coproporphyrinogen-III (O2 route): step 1/1. Functionally, involved in the heme biosynthesis. Catalyzes the aerobic oxidative decarboxylation of propionate groups of rings A and B of coproporphyrinogen-III to yield the vinyl groups in protoporphyrinogen-IX. This Escherichia coli O7:K1 (strain IAI39 / ExPEC) protein is Oxygen-dependent coproporphyrinogen-III oxidase.